Consider the following 142-residue polypeptide: Hemoglobin subunit pi (142 aa).

In terms of domain architecture, Globin spans 2 to 142 (ALTQAEKAAV…ISSVLTEKYR (141 aa)). Heme b is bound by residues H59 and H88.

It belongs to the globin family.

Its function is as follows. The pi' chain is the counterpart of the alpha chain in the major early embryonic hemoglobin P. The protein is Hemoglobin subunit pi of Gallus gallus (Chicken).